The following is a 211-amino-acid chain: Small ribosomal subunit protein uS4 (211 aa).

Residues 99-160 enclose the S4 RNA-binding domain; that stretch reads RRLDSVVYQM…KSRNIQQVRE (62 aa).

This sequence belongs to the universal ribosomal protein uS4 family. Part of the 30S ribosomal subunit. Contacts protein S5. The interaction surface between S4 and S5 is involved in control of translational fidelity.

One of the primary rRNA binding proteins, it binds directly to 16S rRNA where it nucleates assembly of the body of the 30S subunit. Functionally, with S5 and S12 plays an important role in translational accuracy. In Petrotoga mobilis (strain DSM 10674 / SJ95), this protein is Small ribosomal subunit protein uS4.